The chain runs to 216 residues: Imidazole glycerol phosphate synthase subunit HisH (216 aa).

Residues 2–216 (RVAIIDYGSG…LITNFLRWRP (215 aa)) form the Glutamine amidotransferase type-1 domain. Cys88 serves as the catalytic Nucleophile. Active-site residues include His196 and Glu198.

Heterodimer of HisH and HisF.

It is found in the cytoplasm. It catalyses the reaction 5-[(5-phospho-1-deoxy-D-ribulos-1-ylimino)methylamino]-1-(5-phospho-beta-D-ribosyl)imidazole-4-carboxamide + L-glutamine = D-erythro-1-(imidazol-4-yl)glycerol 3-phosphate + 5-amino-1-(5-phospho-beta-D-ribosyl)imidazole-4-carboxamide + L-glutamate + H(+). The enzyme catalyses L-glutamine + H2O = L-glutamate + NH4(+). It participates in amino-acid biosynthesis; L-histidine biosynthesis; L-histidine from 5-phospho-alpha-D-ribose 1-diphosphate: step 5/9. Its function is as follows. IGPS catalyzes the conversion of PRFAR and glutamine to IGP, AICAR and glutamate. The HisH subunit catalyzes the hydrolysis of glutamine to glutamate and ammonia as part of the synthesis of IGP and AICAR. The resulting ammonia molecule is channeled to the active site of HisF. In Mesorhizobium japonicum (strain LMG 29417 / CECT 9101 / MAFF 303099) (Mesorhizobium loti (strain MAFF 303099)), this protein is Imidazole glycerol phosphate synthase subunit HisH.